The following is a 453-amino-acid chain: MTTDTIVAQATALGRGGVGIIRVSGPLAAHVAQTVTGRTLRPRYAEYLPFTDEDGQQLDQGIALFFPNPHSFTGEDVLELQGHGGPVVMDMLIRRILQIKGVRPARPGEFSERAFLNDKMDLTQAEAIADLIDASSEQAAKSALQSLQGEFSKRIHTLVESLIHLRIYVEAAIDFPEEEIDFLADGKVSADLQTIIDNLAAVRREANQGAIMREGMKVVIAGRPNAGKSSLLNALSGKESAIVTDIAGTTRDVLREHIHIDGMPLHIIDTAGLRDASDAVEKIGIERAWEEIRQADRVLFMVDGTTTEATDPQDIWPDFVDKLPENIGITVIRNKADQTGEPLGICHVNQPTLIRLSAKTGQGVDALRQHLKECMGFSGNQEGGFMARRRHLDALERAAEHLAIGQQQLEGYMAGEILAEELRIAQQHLNEITGEFSSDDLLGRIFSSFCIGK.

The (6S)-5-formyl-5,6,7,8-tetrahydrofolate site is built by Arg-22, Glu-79, and Lys-119. The region spanning 215 to 376 (GMKVVIAGRP…LRQHLKECMG (162 aa)) is the TrmE-type G domain. Asn-225 provides a ligand contact to K(+). GTP contacts are provided by residues 225 to 230 (NAGKSS), 244 to 250 (TDIAGTT), 269 to 272 (DTAG), and 334 to 337 (NKAD). Residue Ser-229 coordinates Mg(2+). K(+)-binding residues include Thr-244, Ile-246, and Thr-249. Thr-250 provides a ligand contact to Mg(2+). Lys-453 provides a ligand contact to (6S)-5-formyl-5,6,7,8-tetrahydrofolate.

The protein belongs to the TRAFAC class TrmE-Era-EngA-EngB-Septin-like GTPase superfamily. TrmE GTPase family. As to quaternary structure, homodimer. Heterotetramer of two MnmE and two MnmG subunits. K(+) is required as a cofactor.

The protein localises to the cytoplasm. Functionally, exhibits a very high intrinsic GTPase hydrolysis rate. Involved in the addition of a carboxymethylaminomethyl (cmnm) group at the wobble position (U34) of certain tRNAs, forming tRNA-cmnm(5)s(2)U34. This chain is tRNA modification GTPase MnmE, found in Vibrio cholerae serotype O1 (strain ATCC 39541 / Classical Ogawa 395 / O395).